Consider the following 220-residue polypeptide: Thiamine-phosphate synthase (220 aa).

Residues 46–50 (QFREK) and N83 each bind 4-amino-2-methyl-5-(diphosphooxymethyl)pyrimidine. D84 and D103 together coordinate Mg(2+). Residue S122 coordinates 4-amino-2-methyl-5-(diphosphooxymethyl)pyrimidine. 2-[(2R,5Z)-2-carboxy-4-methylthiazol-5(2H)-ylidene]ethyl phosphate is bound at residue 149–151 (TNS). Residue K152 coordinates 4-amino-2-methyl-5-(diphosphooxymethyl)pyrimidine. Residues G181 and 201-202 (IS) contribute to the 2-[(2R,5Z)-2-carboxy-4-methylthiazol-5(2H)-ylidene]ethyl phosphate site.

The protein belongs to the thiamine-phosphate synthase family. Mg(2+) is required as a cofactor.

The catalysed reaction is 2-[(2R,5Z)-2-carboxy-4-methylthiazol-5(2H)-ylidene]ethyl phosphate + 4-amino-2-methyl-5-(diphosphooxymethyl)pyrimidine + 2 H(+) = thiamine phosphate + CO2 + diphosphate. It carries out the reaction 2-(2-carboxy-4-methylthiazol-5-yl)ethyl phosphate + 4-amino-2-methyl-5-(diphosphooxymethyl)pyrimidine + 2 H(+) = thiamine phosphate + CO2 + diphosphate. The enzyme catalyses 4-methyl-5-(2-phosphooxyethyl)-thiazole + 4-amino-2-methyl-5-(diphosphooxymethyl)pyrimidine + H(+) = thiamine phosphate + diphosphate. It functions in the pathway cofactor biosynthesis; thiamine diphosphate biosynthesis; thiamine phosphate from 4-amino-2-methyl-5-diphosphomethylpyrimidine and 4-methyl-5-(2-phosphoethyl)-thiazole: step 1/1. Functionally, condenses 4-methyl-5-(beta-hydroxyethyl)thiazole monophosphate (THZ-P) and 2-methyl-4-amino-5-hydroxymethyl pyrimidine pyrophosphate (HMP-PP) to form thiamine monophosphate (TMP). In Mannheimia succiniciproducens (strain KCTC 0769BP / MBEL55E), this protein is Thiamine-phosphate synthase.